The following is a 106-amino-acid chain: MYALLEIRGKQYKVKENSTILVPGWEEIKPEEVKVLMVKDEANTVVGTPFVEGAEIELEPVKQIRTKKIKVRRFKAKVNYHRKKSHRIRYTILRINGIKTSVLTEG.

This sequence belongs to the bacterial ribosomal protein bL21 family. As to quaternary structure, part of the 50S ribosomal subunit. Contacts protein L20.

This protein binds to 23S rRNA in the presence of protein L20. In Coprothermobacter proteolyticus (strain ATCC 35245 / DSM 5265 / OCM 4 / BT), this protein is Large ribosomal subunit protein bL21.